Here is a 288-residue protein sequence, read N- to C-terminus: AA9 family lytic polysaccharide monooxygenase A (288 aa).

Residues 1-22 (MKSTSATKFSVLAAATFAAAHG) form the signal peptide. Residues histidine 21 and histidine 104 each coordinate Cu(2+). Intrachain disulfides connect cysteine 74–cysteine 191 and cysteine 115–cysteine 119. N-linked (GlcNAc...) asparagine glycosylation is present at asparagine 151. The O2 site is built by histidine 177 and glutamine 186. Tyrosine 188 lines the Cu(2+) pocket. Residues 236-270 (PEPYKSGSGSSDNAAEAVSSAAAEEPAAAATSAAA) are disordered. The span at 249–270 (AAEAVSSAAAEEPAAAATSAAA) shows a compositional bias: low complexity.

It belongs to the polysaccharide monooxygenase AA9 family. It depends on Cu(2+) as a cofactor.

The protein resides in the secreted. The enzyme catalyses [(1-&gt;4)-beta-D-glucosyl]n+m + reduced acceptor + O2 = 4-dehydro-beta-D-glucosyl-[(1-&gt;4)-beta-D-glucosyl]n-1 + [(1-&gt;4)-beta-D-glucosyl]m + acceptor + H2O.. Functionally, lytic polysaccharide monooxygenase (LPMO) that depolymerizes crystalline and amorphous polysaccharides via the oxidation of scissile alpha- or beta-(1-4)-glycosidic bonds, yielding C1 and C4 oxidation products. Catalysis by LPMOs requires the reduction of the active-site copper from Cu(II) to Cu(I) by a reducing agent and H(2)O(2) or O(2) as a cosubstrate. Active on cellulose and on xyloglucan for deconstruction of plant biomass. This Geotrichum candidum (Oospora lactis) protein is AA9 family lytic polysaccharide monooxygenase A.